We begin with the raw amino-acid sequence, 241 residues long: Eukaryotic translation initiation factor 3 subunit J (241 aa).

The interval methionine 1–lysine 97 is disordered. The span at glycine 28–leucine 45 shows a compositional bias: acidic residues. A coiled-coil region spans residues glutamate 31–threonine 119. 2 stretches are compositionally biased toward basic and acidic residues: residues glutamate 46–lysine 58 and isoleucine 69–lysine 87.

Belongs to the eIF-3 subunit J family. Component of the eukaryotic translation initiation factor 3 (eIF-3) complex.

The protein localises to the cytoplasm. In terms of biological role, component of the eukaryotic translation initiation factor 3 (eIF-3) complex, which is involved in protein synthesis of a specialized repertoire of mRNAs and, together with other initiation factors, stimulates binding of mRNA and methionyl-tRNAi to the 40S ribosome. The eIF-3 complex specifically targets and initiates translation of a subset of mRNAs involved in cell proliferation. The chain is Eukaryotic translation initiation factor 3 subunit J from Aedes aegypti (Yellowfever mosquito).